The following is a 392-amino-acid chain: NAD(P)H-quinone oxidoreductase subunit H (392 aa).

This sequence belongs to the complex I 49 kDa subunit family. In terms of assembly, NDH-1 can be composed of about 15 different subunits; different subcomplexes with different compositions have been identified which probably have different functions.

It is found in the cellular thylakoid membrane. It carries out the reaction a plastoquinone + NADH + (n+1) H(+)(in) = a plastoquinol + NAD(+) + n H(+)(out). It catalyses the reaction a plastoquinone + NADPH + (n+1) H(+)(in) = a plastoquinol + NADP(+) + n H(+)(out). In terms of biological role, NDH-1 shuttles electrons from an unknown electron donor, via FMN and iron-sulfur (Fe-S) centers, to quinones in the respiratory and/or the photosynthetic chain. The immediate electron acceptor for the enzyme in this species is believed to be plastoquinone. Couples the redox reaction to proton translocation, and thus conserves the redox energy in a proton gradient. Cyanobacterial NDH-1 also plays a role in inorganic carbon-concentration. This is NAD(P)H-quinone oxidoreductase subunit H from Synechococcus sp. (strain JA-2-3B'a(2-13)) (Cyanobacteria bacterium Yellowstone B-Prime).